Reading from the N-terminus, the 236-residue chain is uncharacterized protein (236 aa).

The protein to E.coli YfjP and YkfA.

This is an uncharacterized protein from Escherichia coli (strain K12).